The primary structure comprises 255 residues: Homeobox protein DLX-1 (255 aa).

Residues 1-14 (MTMTTMPESLNSPV) show a composition bias toward polar residues. Disordered regions lie at residues 1 to 38 (MTMTTMPESLNSPVSGKAVFMEFGPPNQQMSPSPMSHG) and 95 to 118 (SLAQSRLEDPGADSEKSTVVEGGE). The span at 25 to 36 (PPNQQMSPSPMS) shows a compositional bias: low complexity. Residues 100 to 112 (RLEDPGADSEKST) are compositionally biased toward basic and acidic residues. The homeobox DNA-binding region spans 128–187 (IRKPRTIYSSLQLQALNRRFQQTQYLALPERAELAASLGLTQTQVKIWFQNKRSKFKKLM). Positions 204–230 (ALSAGSPPVPPGWNPNSSSGKGSGGNA) are disordered.

This sequence belongs to the distal-less homeobox family. Interacts with SMAD4 (via homeobox DNA-binding domain). Interacts (via homeobox DNA-binding domain) with POU4F2; this interaction suppresses DLX1-mediated transcriptional activity in postnatal retina and enhances retinal ganglion cell (RGC) differentiation. Expressed in hematopoietic cell lines.

It is found in the nucleus. Plays a role as a transcriptional activator or repressor. Inhibits several cytokine signaling pathways, such as TGFB1, activin-A/INHBA and BMP4 by interfering with the transcriptional stimulatory activity of transcription factors, such as MSX2, FAST2, SMAD2 and SMAD3 during hematopoietic cell differentiation. Plays a role in terminal differentiation of interneurons, such as amacrine and bipolar cells in the developing retina. Likely to play a regulatory role in the development of the ventral forebrain. May play a role in craniofacial patterning and morphogenesis and may be involved in the early development of diencephalic subdivisions. The sequence is that of Homeobox protein DLX-1 (DLX1) from Homo sapiens (Human).